The chain runs to 258 residues: UPF0246 protein YaaA (258 aa).

This sequence belongs to the UPF0246 family.

The chain is UPF0246 protein YaaA from Shigella boydii serotype 18 (strain CDC 3083-94 / BS512).